The chain runs to 312 residues: Dihydroorotate dehydrogenase B (NAD(+)), catalytic subunit (312 aa).

FMN is bound by residues Ser23 and 47 to 48 (KA). Substrate is bound by residues Lys47 and 71–75 (NAIGL). FMN contacts are provided by Asn103 and Asn131. Asn131 contributes to the substrate binding site. Residue Cys134 is the Nucleophile of the active site. 2 residues coordinate FMN: Lys171 and Ile197. 198–199 (NT) contacts substrate. FMN contacts are provided by residues Gly223, 249-250 (GG), and 271-272 (GT).

This sequence belongs to the dihydroorotate dehydrogenase family. Type 1 subfamily. Heterotetramer of 2 PyrK and 2 PyrD type B subunits. FMN is required as a cofactor.

It is found in the cytoplasm. The enzyme catalyses (S)-dihydroorotate + NAD(+) = orotate + NADH + H(+). Its pathway is pyrimidine metabolism; UMP biosynthesis via de novo pathway; orotate from (S)-dihydroorotate (NAD(+) route): step 1/1. In terms of biological role, catalyzes the conversion of dihydroorotate to orotate with NAD(+) as electron acceptor. The sequence is that of Dihydroorotate dehydrogenase B (NAD(+)), catalytic subunit (pyrDB) from Streptococcus pneumoniae serotype 4 (strain ATCC BAA-334 / TIGR4).